The following is a 567-amino-acid chain: Phenylalanine ammonia-lyase (567 aa).

Catalysis depends on tyrosine 78, which acts as the Proton donor/acceptor. A cross-link (5-imidazolinone (Ala-Gly)) is located at residues alanine 167 to glycine 169. Serine 168 bears the 2,3-didehydroalanine (Ser) mark. (E)-cinnamate is bound by residues asparagine 223, glutamine 311, arginine 317, asparagine 347, lysine 419, glutamate 448, and asparagine 451.

The protein belongs to the PAL/histidase family. In terms of assembly, homotetramer. In terms of processing, contains an active site 4-methylidene-imidazol-5-one (MIO), which is formed autocatalytically by cyclization and dehydration of residues Ala-Ser-Gly.

It is found in the cytoplasm. The enzyme catalyses L-phenylalanine = (E)-cinnamate + NH4(+). It functions in the pathway phenylpropanoid metabolism; trans-cinnamate biosynthesis; trans-cinnamate from L-phenylalanine: step 1/1. Its function is as follows. Catalyzes the non-oxidative deamination of L-phenylalanine to form trans-cinnamic acid, the first step in the phenylpropanoid pathway. In Trichormus variabilis (strain ATCC 29413 / PCC 7937) (Anabaena variabilis), this protein is Phenylalanine ammonia-lyase.